The sequence spans 347 residues: Phosphoribosylformylglycinamidine cyclo-ligase (347 aa).

It belongs to the AIR synthase family.

It localises to the cytoplasm. The enzyme catalyses 2-formamido-N(1)-(5-O-phospho-beta-D-ribosyl)acetamidine + ATP = 5-amino-1-(5-phospho-beta-D-ribosyl)imidazole + ADP + phosphate + H(+). Its pathway is purine metabolism; IMP biosynthesis via de novo pathway; 5-amino-1-(5-phospho-D-ribosyl)imidazole from N(2)-formyl-N(1)-(5-phospho-D-ribosyl)glycinamide: step 2/2. The polypeptide is Phosphoribosylformylglycinamidine cyclo-ligase (Yersinia pseudotuberculosis serotype IB (strain PB1/+)).